A 305-amino-acid chain; its full sequence is Homoserine O-acetyltransferase (305 aa).

Catalysis depends on cysteine 142, which acts as the Acyl-thioester intermediate. 2 residues coordinate substrate: lysine 163 and serine 192. Histidine 235 (proton acceptor) is an active-site residue. Residue glutamate 237 is part of the active site. Arginine 249 contacts substrate.

It belongs to the MetA family.

It localises to the cytoplasm. It catalyses the reaction L-homoserine + acetyl-CoA = O-acetyl-L-homoserine + CoA. It functions in the pathway amino-acid biosynthesis; L-methionine biosynthesis via de novo pathway; O-acetyl-L-homoserine from L-homoserine: step 1/1. Transfers an acetyl group from acetyl-CoA to L-homoserine, forming acetyl-L-homoserine. This chain is Homoserine O-acetyltransferase, found in Bacteroides fragilis (strain ATCC 25285 / DSM 2151 / CCUG 4856 / JCM 11019 / LMG 10263 / NCTC 9343 / Onslow / VPI 2553 / EN-2).